The chain runs to 114 residues: T cell receptor beta variable 6-1 (114 aa).

Positions 1 to 21 (MSIGLLCCVAFSLLWASPVNA) are cleaved as a signal peptide. The Ig-like domain occupies 22–114 (GVTQTPKFQV…TSVYFCASSE (93 aa)). Cys42 and Cys110 form a disulfide bridge. The N-linked (GlcNAc...) asparagine glycan is linked to Asn84.

Alpha-beta TR is a heterodimer composed of an alpha and beta chain; disulfide-linked. The alpha-beta TR is associated with the transmembrane signaling CD3 coreceptor proteins to form the TR-CD3 (TcR or TCR). The assembly of alpha-beta TR heterodimers with CD3 occurs in the endoplasmic reticulum where a single alpha-beta TR heterodimer associates with one CD3D-CD3E heterodimer, one CD3G-CD3E heterodimer and one CD247 homodimer forming a stable octameric structure. CD3D-CD3E and CD3G-CD3E heterodimers preferentially associate with TR alpha and TR beta chains, respectively. The association of the CD247 homodimer is the last step of TcR assembly in the endoplasmic reticulum and is required for transport to the cell surface.

It is found in the cell membrane. V region of the variable domain of T cell receptor (TR) beta chain that participates in the antigen recognition. Alpha-beta T cell receptors are antigen specific receptors which are essential to the immune response and are present on the cell surface of T lymphocytes. Recognize peptide-major histocompatibility (MH) (pMH) complexes that are displayed by antigen presenting cells (APC), a prerequisite for efficient T cell adaptive immunity against pathogens. Binding of alpha-beta TR to pMH complex initiates TR-CD3 clustering on the cell surface and intracellular activation of LCK that phosphorylates the ITAM motifs of CD3G, CD3D, CD3E and CD247 enabling the recruitment of ZAP70. In turn ZAP70 phosphorylates LAT, which recruits numerous signaling molecules to form the LAT signalosome. The LAT signalosome propagates signal branching to three major signaling pathways, the calcium, the mitogen-activated protein kinase (MAPK) kinase and the nuclear factor NF-kappa-B (NF-kB) pathways, leading to the mobilization of transcription factors that are critical for gene expression and essential for T cell growth and differentiation. The T cell repertoire is generated in the thymus, by V-(D)-J rearrangement. This repertoire is then shaped by intrathymic selection events to generate a peripheral T cell pool of self-MH restricted, non-autoaggressive T cells. Post-thymic interaction of alpha-beta TR with the pMH complexes shapes TR structural and functional avidity. The sequence is that of T cell receptor beta variable 6-1 from Homo sapiens (Human).